Here is a 509-residue protein sequence, read N- to C-terminus: Lysine--tRNA ligase (509 aa).

Mg(2+) contacts are provided by E418 and E425.

Belongs to the class-II aminoacyl-tRNA synthetase family. Homodimer. Mg(2+) serves as cofactor.

The protein localises to the cytoplasm. It catalyses the reaction tRNA(Lys) + L-lysine + ATP = L-lysyl-tRNA(Lys) + AMP + diphosphate. This chain is Lysine--tRNA ligase, found in Acinetobacter baumannii (strain ATCC 17978 / DSM 105126 / CIP 53.77 / LMG 1025 / NCDC KC755 / 5377).